We begin with the raw amino-acid sequence, 407 residues long: Chorismate synthase (407 aa).

NADP(+) contacts are provided by R40 and R46. FMN-binding positions include 135–137 (RAS), 256–257 (QA), G300, 315–319 (KPIST), and R341.

It belongs to the chorismate synthase family. As to quaternary structure, homotetramer. The cofactor is FMNH2.

It catalyses the reaction 5-O-(1-carboxyvinyl)-3-phosphoshikimate = chorismate + phosphate. It functions in the pathway metabolic intermediate biosynthesis; chorismate biosynthesis; chorismate from D-erythrose 4-phosphate and phosphoenolpyruvate: step 7/7. Its function is as follows. Catalyzes the anti-1,4-elimination of the C-3 phosphate and the C-6 proR hydrogen from 5-enolpyruvylshikimate-3-phosphate (EPSP) to yield chorismate, which is the branch point compound that serves as the starting substrate for the three terminal pathways of aromatic amino acid biosynthesis. This reaction introduces a second double bond into the aromatic ring system. The protein is Chorismate synthase of Mycobacterium leprae (strain Br4923).